The following is a 375-amino-acid chain: Growth/differentiation factor 8 (375 aa).

The N-terminal stretch at 1–18 (MQKLQISVYIYLFMLIVA) is a signal peptide. Positions 19 to 266 (GPVDLNENSE…VTDTPKRSRR (248 aa)) are excised as a propeptide. 2 N-linked (GlcNAc...) asparagine glycosylation sites follow: N47 and N71. Intrachain disulfides connect C272-C282, C281-C340, C309-C372, and C313-C374.

Belongs to the TGF-beta family. Homodimer; disulfide-linked. Interacts with WFIKKN2, leading to inhibit its activity. Interacts with FSTL3. Synthesized as large precursor molecule that undergoes proteolytic cleavage to generate an N-terminal propeptide and a disulfide linked C-terminal dimer, which is the biologically active molecule. The circulating form consists of a latent complex of the C-terminal dimer and other proteins, including its propeptide, which maintain the C-terminal dimer in a latent, inactive state. Ligand activation requires additional cleavage of the prodomain by a tolloid-like metalloproteinase.

It localises to the secreted. Functionally, acts specifically as a negative regulator of skeletal muscle growth. This is Growth/differentiation factor 8 (MSTN) from Bubalus bubalis (Domestic water buffalo).